The following is a 474-amino-acid chain: tRNA-2-methylthio-N(6)-dimethylallyladenosine synthase (474 aa).

Positions 3 to 120 (KKLHIKTWGC…LPEMINSVRG (118 aa)) constitute an MTTase N-terminal domain. [4Fe-4S] cluster contacts are provided by C12, C49, C83, C157, C161, and C164. In terms of domain architecture, Radical SAM core spans 143-375 (RAEGPTAFVS…QERINQQAMA (233 aa)). The TRAM domain maps to 378-441 (RRMLGSTQRI…PNSLRGKVVR (64 aa)).

It belongs to the methylthiotransferase family. MiaB subfamily. In terms of assembly, monomer. [4Fe-4S] cluster is required as a cofactor.

Its subcellular location is the cytoplasm. The enzyme catalyses N(6)-dimethylallyladenosine(37) in tRNA + (sulfur carrier)-SH + AH2 + 2 S-adenosyl-L-methionine = 2-methylsulfanyl-N(6)-dimethylallyladenosine(37) in tRNA + (sulfur carrier)-H + 5'-deoxyadenosine + L-methionine + A + S-adenosyl-L-homocysteine + 2 H(+). Catalyzes the methylthiolation of N6-(dimethylallyl)adenosine (i(6)A), leading to the formation of 2-methylthio-N6-(dimethylallyl)adenosine (ms(2)i(6)A) at position 37 in tRNAs that read codons beginning with uridine. The sequence is that of tRNA-2-methylthio-N(6)-dimethylallyladenosine synthase from Salmonella arizonae (strain ATCC BAA-731 / CDC346-86 / RSK2980).